The following is a 362-amino-acid chain: Protein Tob1 (362 aa).

Residues Arg22–Lys39 carry the Bipartite nuclear localization signal motif. Residues Val82 to Val92 are important for nuclear localization. Over residues Asp144–Ser160 the composition is skewed to low complexity. The interval Asp144–Ser171 is disordered. Residues Ala161 to Lys220 are required for interaction with CPEB3. Thr204 carries the phosphothreonine modification. The Nuclear export signal motif lies at Val228 to Leu236. A disordered region spans residues Leu234–Leu284. Composition is skewed to low complexity over residues Ser238 to Ser256 and Gln265 to Gln280.

The protein belongs to the BTG family. In terms of assembly, interacts with ERBB2. Interacts with CNOT7. Interacts with CPEB3 (via C-terminal RNA-binding region); recruits CNOT7 to CPEB3 to form a ternary complex required for mRNA deadenylation and decay. Interacts with CNOT8. Interacts with CPEB4. Phosphorylated on Ser and Thr residues. In terms of tissue distribution, ubiquitous.

The protein localises to the cytoplasm. It localises to the nucleus. Functionally, anti-proliferative protein; the function is mediated by association with deadenylase subunits of the CCR4-NOT complex. Mediates CPEB3-accelerated mRNA deadenylation by binding to CPEB3 and recruiting CNOT7 which leads to target mRNA deadenylation and decay. The sequence is that of Protein Tob1 (Tob1) from Mus musculus (Mouse).